The sequence spans 560 residues: Formate--tetrahydrofolate ligase (560 aa).

ATP is bound at residue 69 to 76 (TPAGEGKS).

This sequence belongs to the formate--tetrahydrofolate ligase family.

The enzyme catalyses (6S)-5,6,7,8-tetrahydrofolate + formate + ATP = (6R)-10-formyltetrahydrofolate + ADP + phosphate. Its pathway is one-carbon metabolism; tetrahydrofolate interconversion. This chain is Formate--tetrahydrofolate ligase, found in Listeria monocytogenes serovar 1/2a (strain ATCC BAA-679 / EGD-e).